The sequence spans 234 residues: Phosphoribosylaminoimidazole-succinocarboxamide synthase (234 aa).

This sequence belongs to the SAICAR synthetase family.

It catalyses the reaction 5-amino-1-(5-phospho-D-ribosyl)imidazole-4-carboxylate + L-aspartate + ATP = (2S)-2-[5-amino-1-(5-phospho-beta-D-ribosyl)imidazole-4-carboxamido]succinate + ADP + phosphate + 2 H(+). Its pathway is purine metabolism; IMP biosynthesis via de novo pathway; 5-amino-1-(5-phospho-D-ribosyl)imidazole-4-carboxamide from 5-amino-1-(5-phospho-D-ribosyl)imidazole-4-carboxylate: step 1/2. This Staphylococcus aureus (strain COL) protein is Phosphoribosylaminoimidazole-succinocarboxamide synthase.